The following is a 448-amino-acid chain: Phosphohexose mutases (448 aa).

S97 acts as the Phosphoserine intermediate in catalysis. Residues S97, D237, D239, and D241 each contribute to the Mg(2+) site.

The protein belongs to the phosphohexose mutase family. Mg(2+) serves as cofactor.

It carries out the reaction alpha-D-glucose 1-phosphate = alpha-D-glucose 6-phosphate. It catalyses the reaction alpha-D-mannose 1-phosphate = D-mannose 6-phosphate. It functions in the pathway nucleotide-sugar biosynthesis; GDP-alpha-D-mannose biosynthesis; alpha-D-mannose 1-phosphate from D-fructose 6-phosphate: step 2/2. In terms of biological role, involved in xanthan production. In Xanthomonas campestris pv. campestris (strain B100), this protein is Phosphohexose mutases (xanA).